The following is a 92-amino-acid chain: SPbeta prophage-derived uncharacterized protein YoqM (92 aa).

The signal sequence occupies residues 1–25 (MKLRKVLTGSVLSLGLLVSASPAFA).

In Bacillus subtilis (strain 168), this protein is SPbeta prophage-derived uncharacterized protein YoqM (yoqM).